Reading from the N-terminus, the 481-residue chain is Aspartyl/glutamyl-tRNA(Asn/Gln) amidotransferase subunit B (481 aa).

This sequence belongs to the GatB/GatE family. GatB subfamily. In terms of assembly, heterotrimer of A, B and C subunits.

It carries out the reaction L-glutamyl-tRNA(Gln) + L-glutamine + ATP + H2O = L-glutaminyl-tRNA(Gln) + L-glutamate + ADP + phosphate + H(+). It catalyses the reaction L-aspartyl-tRNA(Asn) + L-glutamine + ATP + H2O = L-asparaginyl-tRNA(Asn) + L-glutamate + ADP + phosphate + 2 H(+). Functionally, allows the formation of correctly charged Asn-tRNA(Asn) or Gln-tRNA(Gln) through the transamidation of misacylated Asp-tRNA(Asn) or Glu-tRNA(Gln) in organisms which lack either or both of asparaginyl-tRNA or glutaminyl-tRNA synthetases. The reaction takes place in the presence of glutamine and ATP through an activated phospho-Asp-tRNA(Asn) or phospho-Glu-tRNA(Gln). In Teredinibacter turnerae (strain ATCC 39867 / T7901), this protein is Aspartyl/glutamyl-tRNA(Asn/Gln) amidotransferase subunit B.